A 354-amino-acid chain; its full sequence is Protein NDH-DEPENDENT CYCLIC ELECTRON FLOW 5 (354 aa).

A chloroplast-targeting transit peptide spans 1-49 (MALVHYMNVSRSTFPLSRSSKINLSSSFASLPLQFHKNIKRLESSVPPS).

It localises to the plastid. The protein localises to the chloroplast thylakoid membrane. Functionally, required for both formation and activity of the chloroplast NAD(P)H dehydrogenase (NDH) complex of the photosynthetic electron transport chain. May function in assembly or stabilization of the NDH complex. The sequence is that of Protein NDH-DEPENDENT CYCLIC ELECTRON FLOW 5 from Arabidopsis thaliana (Mouse-ear cress).